A 409-amino-acid polypeptide reads, in one-letter code: Arginine deiminase (409 aa).

C399 functions as the Amidino-cysteine intermediate in the catalytic mechanism.

This sequence belongs to the arginine deiminase family.

Its subcellular location is the cytoplasm. It carries out the reaction L-arginine + H2O = L-citrulline + NH4(+). It functions in the pathway amino-acid degradation; L-arginine degradation via ADI pathway; carbamoyl phosphate from L-arginine: step 1/2. The protein is Arginine deiminase of Borreliella afzelii (strain PKo) (Borrelia afzelii).